We begin with the raw amino-acid sequence, 23 residues long: Basic phospholipase A2 homolog CTs-K49c (23 aa).

Contains 7 disulfide bonds. As to expression, expressed by the venom gland.

The protein resides in the secreted. In terms of biological role, snake venom phospholipase A2 homolog that lacks catalytic activity. Shows myotoxic activities. Induces local edema a few hours after injection (5-10 ug) in the hind paw. The sequence is that of Basic phospholipase A2 homolog CTs-K49c from Trimeresurus stejnegeri (Chinese green tree viper).